The following is a 350-amino-acid chain: 4-hydroxy-2-oxovalerate aldolase 2 (350 aa).

Residues 8-260 (ITVHDMTLRD…ETGVDVFKIQ (253 aa)) form the Pyruvate carboxyltransferase domain. Residue 16 to 17 (RD) coordinates substrate. Residue Asp17 participates in Mn(2+) binding. His20 acts as the Proton acceptor in catalysis. 2 residues coordinate substrate: Ser170 and His199. Mn(2+)-binding residues include His199 and His201. Tyr290 contacts substrate.

It belongs to the 4-hydroxy-2-oxovalerate aldolase family.

It catalyses the reaction (S)-4-hydroxy-2-oxopentanoate = acetaldehyde + pyruvate. The protein is 4-hydroxy-2-oxovalerate aldolase 2 (tesG) of Comamonas testosteroni (Pseudomonas testosteroni).